Here is a 1029-residue protein sequence, read N- to C-terminus: MPPIPHVRPENVLRRAEELIAVGQPAAALSVLHEHVTSKRSRSSPIASLEPVMLLFVELCVDLRKGKSAKDGLYQYKNIAQNTNVGTIEMVLKKFIELAEQKVTEAQAKADEIQSSLESAAPTSNVEDLDAIETPETILLATVSGEQSRDRTDRAVVTPWLKFLWETYRTVLEILKNNARLEVMYQATALQAFQFCLKYTRKTEFRRLCELLRNHVQNAAKYSAQMHAINLSDPDTLQRHLDTRFQQLNVAVELELWQEGFRSVEDIHTLLNLSKRQPKNIMMANYYEKLTKIFMVSDNYLFHAAAWNRYYNLLRQSAIALAAGQGSKKDSPSVTEADMTKAASFVLLSALSIPVISTSRSRGALVDVDEVRKNKNTRLTNLLGMPQPPTRASLFKDALNKGLLSRCRPEIRDLYNILEVDFHPLSICKKISPILKEIGADPEMEKYVLPLQQVILTRLFQQLSQVYESVELKFVHELAHFPEPFQVTSSMIEKFIMNGCKKGDLAIRVDHVSGVLTFESDIFSSAKALHPGSAAGSAESEVGSVQRLQSTPAEIARSQLARLAKTLHVTCMYVDPSYNQARIKAKEAAHARARAGAAKEHEETLTRRAIIEKRKEALSDALQKKQREEENRKRARNQQLQEAEQQRLLDEHRERERKRMKDEQDRIRQQELKKQLEELKTGVKGIDVNQIDLEELDSNRLRAIKLAQLEKEKNDLNEKIRITSKRIDHLERAFRREELKHLPEDYETQKKQDLETYEQTKEETLKAARQKHKEDVALKHRLSRLVPYFNDFKKSVTEKRHEEFERRRKAADREFEQKKKQRIKEVHERIRRERAEREAEEQRRREEEERIAREEQERIAKEEERRRALAEEKAAREEQRRKLDEQAIRQRQREEEAEQRRAARKAGLAEPRGPAREASPERTAPRLNLAGRTGTSWRDRQAAKAAASAGEQPAAAQEATPAPPAKAGSYLPPHLRATRDGPSDSRDLSHARESAAPPRQFSRSPVPPSGAPSSQEKPGPWRPRFKQQQ.

Residues 92–121 are a coiled coil; that stretch reads LKKFIELAEQKVTEAQAKADEIQSSLESAA. A PCI domain is found at 339-523; the sequence is MTKAASFVLL…GVLTFESDIF (185 aa). Residues 606 to 903 adopt a coiled-coil conformation; it reads TRRAIIEKRK…EEEAEQRRAA (298 aa). Composition is skewed to basic and acidic residues over residues 621-632, 644-666, 797-901, and 913-924; these read ALQKKQREEENR, EQQRLLDEHRERERKRMKDEQDR, TEKR…EQRR, and GPAREASPERTA. Disordered regions lie at residues 621–666 and 797–1029; these read ALQK…EQDR and TEKR…KQQQ. Residues 943 to 960 are compositionally biased toward low complexity; the sequence is AKAAASAGEQPAAAQEAT. Positions 977-993 are enriched in basic and acidic residues; it reads ATRDGPSDSRDLSHARE.

This sequence belongs to the eIF-3 subunit A family. In terms of assembly, component of the eukaryotic translation initiation factor 3 (eIF-3) complex.

The protein resides in the cytoplasm. In terms of biological role, RNA-binding component of the eukaryotic translation initiation factor 3 (eIF-3) complex, which is involved in protein synthesis of a specialized repertoire of mRNAs and, together with other initiation factors, stimulates binding of mRNA and methionyl-tRNAi to the 40S ribosome. The eIF-3 complex specifically targets and initiates translation of a subset of mRNAs involved in cell proliferation. This chain is Eukaryotic translation initiation factor 3 subunit A, found in Coccidioides immitis (strain RS) (Valley fever fungus).